The sequence spans 279 residues: ATP synthase gamma chain (279 aa).

This sequence belongs to the ATPase gamma chain family. F-type ATPases have 2 components, CF(1) - the catalytic core - and CF(0) - the membrane proton channel. CF(1) has five subunits: alpha(3), beta(3), gamma(1), delta(1), epsilon(1). CF(0) has three main subunits: a, b and c.

It localises to the cell membrane. In terms of biological role, produces ATP from ADP in the presence of a proton gradient across the membrane. The gamma chain is believed to be important in regulating ATPase activity and the flow of protons through the CF(0) complex. The protein is ATP synthase gamma chain of Mycoplasma genitalium (strain ATCC 33530 / DSM 19775 / NCTC 10195 / G37) (Mycoplasmoides genitalium).